We begin with the raw amino-acid sequence, 119 residues long: Large ribosomal subunit protein uL22 (119 aa).

Belongs to the universal ribosomal protein uL22 family. As to quaternary structure, part of the 50S ribosomal subunit.

Its function is as follows. This protein binds specifically to 23S rRNA; its binding is stimulated by other ribosomal proteins, e.g. L4, L17, and L20. It is important during the early stages of 50S assembly. It makes multiple contacts with different domains of the 23S rRNA in the assembled 50S subunit and ribosome. In terms of biological role, the globular domain of the protein is located near the polypeptide exit tunnel on the outside of the subunit, while an extended beta-hairpin is found that lines the wall of the exit tunnel in the center of the 70S ribosome. The chain is Large ribosomal subunit protein uL22 from Bifidobacterium longum (strain DJO10A).